We begin with the raw amino-acid sequence, 699 residues long: Elongation factor G (699 aa).

Residues 8–288 form the tr-type G domain; the sequence is EDYRNFGIMA…AVCEYLPSPL (281 aa). GTP contacts are provided by residues 17 to 24, 86 to 90, and 140 to 143; these read AHIDAGKT, DTPGH, and NKMD.

It belongs to the TRAFAC class translation factor GTPase superfamily. Classic translation factor GTPase family. EF-G/EF-2 subfamily.

It localises to the cytoplasm. In terms of biological role, catalyzes the GTP-dependent ribosomal translocation step during translation elongation. During this step, the ribosome changes from the pre-translocational (PRE) to the post-translocational (POST) state as the newly formed A-site-bound peptidyl-tRNA and P-site-bound deacylated tRNA move to the P and E sites, respectively. Catalyzes the coordinated movement of the two tRNA molecules, the mRNA and conformational changes in the ribosome. This is Elongation factor G from Allorhizobium ampelinum (strain ATCC BAA-846 / DSM 112012 / S4) (Agrobacterium vitis (strain S4)).